A 301-amino-acid chain; its full sequence is Sulfate adenylyltransferase subunit 2 (301 aa).

The protein belongs to the PAPS reductase family. CysD subfamily. As to quaternary structure, heterodimer composed of CysD, the smaller subunit, and CysN.

It catalyses the reaction sulfate + ATP + H(+) = adenosine 5'-phosphosulfate + diphosphate. Its pathway is sulfur metabolism; hydrogen sulfide biosynthesis; sulfite from sulfate: step 1/3. Its function is as follows. With CysN forms the ATP sulfurylase (ATPS) that catalyzes the adenylation of sulfate producing adenosine 5'-phosphosulfate (APS) and diphosphate, the first enzymatic step in sulfur assimilation pathway. APS synthesis involves the formation of a high-energy phosphoric-sulfuric acid anhydride bond driven by GTP hydrolysis by CysN coupled to ATP hydrolysis by CysD. In Geobacter metallireducens (strain ATCC 53774 / DSM 7210 / GS-15), this protein is Sulfate adenylyltransferase subunit 2.